The primary structure comprises 999 residues: Multiple C2 and transmembrane domain-containing protein 1 (999 aa).

Positions 1–19 are enriched in low complexity; the sequence is MEPRAAAAGEPEPPAASSS. The tract at residues 1–241 is disordered; that stretch reads MEPRAAAAGE…TGEEHGSSQK (241 aa). Gly residues predominate over residues 34–44; the sequence is RSKGGGGGRAG. Residues 65–79 show a composition bias toward low complexity; it reads GNAPARGSGAGSRWS. A compositionally biased stretch (polar residues) spans 92 to 101; that stretch reads FSSSQPNLCC. Low complexity-rich tracts occupy residues 131–141 and 149–169; these read PAVKGPAAASG and GGRS…LSSS. Composition is skewed to basic and acidic residues over residues 175-185 and 228-238; these read RGDRARDEGAR and RAPETGEEHGS. 3 consecutive C2 domains span residues 242-360, 452-569, and 603-724; these read IINT…DVTL, QTQS…KLEL, and QKER…AYVL. Ca(2+) is bound by residues aspartate 277, aspartate 283, aspartate 330, aspartate 332, aspartate 338, aspartate 486, aspartate 492, aspartate 539, aspartate 541, aspartate 547, aspartate 642, aspartate 648, aspartate 694, aspartate 696, and aspartate 702. 2 helical membrane-spanning segments follow: residues 811–831 and 914–934; these read FVLF…LVLL and PFLS…LYCI.

Belongs to the MCTP family. The cofactor is Ca(2+).

The protein resides in the cytoplasmic vesicle. Its subcellular location is the secretory vesicle. It localises to the synaptic vesicle membrane. It is found in the recycling endosome. The protein localises to the endoplasmic reticulum membrane. Its function is as follows. Calcium sensor which is essential for the stabilization of normal baseline neurotransmitter release and for the induction and long-term maintenance of presynaptic homeostatic plasticity. The polypeptide is Multiple C2 and transmembrane domain-containing protein 1 (MCTP1) (Homo sapiens (Human)).